Here is a 235-residue protein sequence, read N- to C-terminus: MSDKPNNFPPLPRFIPLKPCFYQDFDTDIPDVHRTTAKRLYYLWMLNSITLGVNLIGCLAWLIGGGGATNFGLAFLWLILFTPCSYVCWFRPIYKAFKTDSSFNFMAFFFTFTGQLVISIIQAVGIPGWGVCGWIASISFFGTNVGSAVVMLIPTIMFTAVAVLSFVALTKVHRFYRGAGGSMSKAQEEWTTGAWKNPHVQQAAQNAAFGAAQGAMTQNEPQYSATPNYGYSNQM.

The Cytoplasmic portion of the chain corresponds to 1 to 39 (MSDKPNNFPPLPRFIPLKPCFYQDFDTDIPDVHRTTAKR). Residues 40 to 60 (LYYLWMLNSITLGVNLIGCLA) traverse the membrane as a helical segment. Topologically, residues 61–67 (WLIGGGG) are extracellular. The helical transmembrane segment at 68–88 (ATNFGLAFLWLILFTPCSYVC) threads the bilayer. The Cytoplasmic portion of the chain corresponds to 89–102 (WFRPIYKAFKTDSS). The helical transmembrane segment at 103-125 (FNFMAFFFTFTGQLVISIIQAVG) threads the bilayer. Over 126-148 (IPGWGVCGWIASISFFGTNVGSA) the chain is Extracellular. The helical transmembrane segment at 149-169 (VVMLIPTIMFTAVAVLSFVAL) threads the bilayer. Residues 170-235 (TKVHRFYRGA…TPNYGYSNQM (66 aa)) are Cytoplasmic-facing.

The protein belongs to the SCAMP family. SCAMP5 subfamily.

It is found in the cell membrane. It localises to the golgi apparatus membrane. The protein resides in the golgi apparatus. The protein localises to the trans-Golgi network membrane. Its subcellular location is the recycling endosome membrane. It is found in the cytoplasmic vesicle. It localises to the secretory vesicle. The protein resides in the synaptic vesicle membrane. In terms of biological role, required for the calcium-dependent exocytosis of signal sequence-containing cytokines. Probably acts in cooperation with the SNARE machinery. The polypeptide is Secretory carrier-associated membrane protein 5B (scamp5-b) (Xenopus laevis (African clawed frog)).